Here is a 614-residue protein sequence, read N- to C-terminus: Probable Xaa-Pro aminopeptidase P (614 aa).

Residues Asp411, Asp422, Glu520, and Glu534 each coordinate Mn(2+).

Belongs to the peptidase M24B family. Requires Mn(2+) as cofactor.

The enzyme catalyses Release of any N-terminal amino acid, including proline, that is linked to proline, even from a dipeptide or tripeptide.. Functionally, catalyzes the removal of a penultimate prolyl residue from the N-termini of peptides. This Sordaria macrospora (strain ATCC MYA-333 / DSM 997 / K(L3346) / K-hell) protein is Probable Xaa-Pro aminopeptidase P (AMPP).